We begin with the raw amino-acid sequence, 309 residues long: Dihydroorotate dehydrogenase B (NAD(+)), catalytic subunit (309 aa).

Residues S21 and 45–46 (KA) contribute to the FMN site. Substrate-binding positions include K45 and 69–73 (NAIGL). Residues N99 and N127 each coordinate FMN. N127 provides a ligand contact to substrate. The Nucleophile role is filled by C130. 2 residues coordinate FMN: K165 and I191. Residue 192–193 (NT) coordinates substrate. Residues G217, 243–244 (GG), and 265–266 (GT) each bind FMN.

Belongs to the dihydroorotate dehydrogenase family. Type 1 subfamily. Heterotetramer of 2 PyrK and 2 PyrD type B subunits. FMN is required as a cofactor.

It is found in the cytoplasm. It carries out the reaction (S)-dihydroorotate + NAD(+) = orotate + NADH + H(+). It functions in the pathway pyrimidine metabolism; UMP biosynthesis via de novo pathway; orotate from (S)-dihydroorotate (NAD(+) route): step 1/1. Its function is as follows. Catalyzes the conversion of dihydroorotate to orotate with NAD(+) as electron acceptor. This chain is Dihydroorotate dehydrogenase B (NAD(+)), catalytic subunit (pyrD), found in Bacillus cereus (strain AH187).